We begin with the raw amino-acid sequence, 546 residues long: Chaperonin GroEL (546 aa).

ATP contacts are provided by residues 30 to 33 (TLGP), Lys51, 87 to 91 (DGTTT), Gly415, and Asp497. Residues 527–546 (PKKDSPAPAMPGGGMGGMDF) form a disordered region. The segment covering 537-546 (PGGGMGGMDF) has biased composition (gly residues).

The protein belongs to the chaperonin (HSP60) family. Forms a cylinder of 14 subunits composed of two heptameric rings stacked back-to-back. Interacts with the co-chaperonin GroES.

It localises to the cytoplasm. It carries out the reaction ATP + H2O + a folded polypeptide = ADP + phosphate + an unfolded polypeptide.. Together with its co-chaperonin GroES, plays an essential role in assisting protein folding. The GroEL-GroES system forms a nano-cage that allows encapsulation of the non-native substrate proteins and provides a physical environment optimized to promote and accelerate protein folding. In Methylobacterium radiotolerans (strain ATCC 27329 / DSM 1819 / JCM 2831 / NBRC 15690 / NCIMB 10815 / 0-1), this protein is Chaperonin GroEL.